Consider the following 397-residue polypeptide: Cercosporin biosynthesis regulatory protein CTB8 (397 aa).

A DNA-binding region (zn(2)-C6 fungal-type) is located at residues 26–53; that stretch reads CTHCSSQKIRCTKERPACARCVNKGLLC. Disordered stretches follow at residues 63–90 and 173–198; these read TRRH…APDS and AEAS…ATTH. A compositionally biased stretch (polar residues) spans 74 to 87; sequence PETTISNAPTSSVA. Residues 179-197 are compositionally biased toward low complexity; the sequence is PSSSSSPPSQRSDGGRATT.

It localises to the nucleus. Transcription regulator of the gene cluster that mediates the biosynthesis of cercosporin, a light-activated, non-host-selective toxin. The perylenequinone chromophore of cercosporin absorbs light energy to attain an electronically-activated triplet state and produces active oxygen species such as the hydroxyl radical, superoxide, hydrogen peroxide or singlet oxygen upon reaction with oxygen molecules. These reactive oxygen species cause damage to various cellular components including lipids, proteins and nucleic acids. This is Cercosporin biosynthesis regulatory protein CTB8 from Cercospora beticola (Sugarbeet leaf spot fungus).